The primary structure comprises 669 residues: Threonine--tRNA ligase (669 aa).

A TGS domain is found at 3–60 (DAQQITLIVDGEETKVTEGTTGAELFFERRDVVVARVNGVLKDLDQVLTEGADVEGVT). The interval 260–566 (DHRKLGVELD…LTEHYAGAFP (307 aa)) is catalytic. Residues Cys365, His416, and His543 each coordinate Zn(2+).

This sequence belongs to the class-II aminoacyl-tRNA synthetase family. In terms of assembly, homodimer. It depends on Zn(2+) as a cofactor.

Its subcellular location is the cytoplasm. The enzyme catalyses tRNA(Thr) + L-threonine + ATP = L-threonyl-tRNA(Thr) + AMP + diphosphate + H(+). Catalyzes the attachment of threonine to tRNA(Thr) in a two-step reaction: L-threonine is first activated by ATP to form Thr-AMP and then transferred to the acceptor end of tRNA(Thr). Also edits incorrectly charged L-seryl-tRNA(Thr). The polypeptide is Threonine--tRNA ligase (Paenarthrobacter aurescens (strain TC1)).